Reading from the N-terminus, the 861-residue chain is Major vault protein (861 aa).

N-acetylalanine is present on Ala2. 9 MVP repeats span residues 2–56, 57–111, 112–164, 165–217, 218–272, 273–323, 324–379, 380–457, and 458–520; these read ATEE…VPPR, HYCI…DITP, LQVV…EIIQ, ATVI…DLVD, AVIL…GVVP, ITTL…IQDV, YVLS…ERQA, IPLD…KTRV, and VSYR…LLGP. Ser421 carries the post-translational modification Phosphoserine. Lys444 is covalently cross-linked (Glycyl lysine isopeptide (Lys-Gly) (interchain with G-Cter in SUMO2)). A Glycyl lysine isopeptide (Lys-Gly) (interchain with G-Cter in SUMO2) cross-link involves residue Lys704.

As to quaternary structure, the vault ribonucleoprotein particle is a huge (400 A x 670 A) cage structure of 12.9 MDa. It consists of a dimer of half-vaults, with each half-vault comprising 39 identical major vault protein (MVP) chains, PARP4 and one or more vault RNAs (vRNAs). Interacts with PTEN and activated MAPK1. The phosphorylated protein interacts with the SH2 domains of PTPN11 and SRC. Interacts with APEX1. May interact with ZNF540. Interacts with TEP1. In terms of processing, phosphorylated on Tyr residues after EGF stimulation. Dephosphorylated by PTPN11.

It is found in the cytoplasm. The protein localises to the nucleus. Its function is as follows. Required for normal vault structure. Vaults are multi-subunit structures that may act as scaffolds for proteins involved in signal transduction. Vaults may also play a role in nucleo-cytoplasmic transport. Down-regulates IFNG-mediated STAT1 signaling and subsequent activation of JAK. Down-regulates SRC activity and signaling through MAP kinases. This is Major vault protein (Mvp) from Mus musculus (Mouse).